Here is a 321-residue protein sequence, read N- to C-terminus: Glucokinase (321 aa).

8–13 is a binding site for ATP; it reads GDVGGT.

The protein belongs to the bacterial glucokinase family.

The protein localises to the cytoplasm. It carries out the reaction D-glucose + ATP = D-glucose 6-phosphate + ADP + H(+). This is Glucokinase from Erwinia tasmaniensis (strain DSM 17950 / CFBP 7177 / CIP 109463 / NCPPB 4357 / Et1/99).